The primary structure comprises 480 residues: Aromatic-L-amino-acid decarboxylase (480 aa).

The residue at position 1 (Met1) is an N-acetylmethionine. Tandem repeats lie at residues 58-115 (KDIE…TELE) and 118-178 (MMDW…TQAA). A 2 X approximate tandem repeats region spans residues 58-178 (KDIEKIIMPG…AASPEFTQAA (121 aa)). Thr82 contacts substrate. The pyridoxal 5'-phosphate site is built by Ala148 and Ser149. Residue His192 participates in substrate binding. Pyridoxal 5'-phosphate is bound by residues Thr246 and Asn300. Lys303 is subject to N6-(pyridoxal phosphate)lysine.

It belongs to the group II decarboxylase family. In terms of assembly, homodimer. The cofactor is pyridoxal 5'-phosphate.

It catalyses the reaction L-dopa + H(+) = dopamine + CO2. It carries out the reaction 5-hydroxy-L-tryptophan + H(+) = serotonin + CO2. It participates in catecholamine biosynthesis; dopamine biosynthesis; dopamine from L-tyrosine: step 2/2. Its function is as follows. Catalyzes the decarboxylation of L-3,4-dihydroxyphenylalanine (DOPA) to dopamine and L-5-hydroxytryptophan to serotonin. The sequence is that of Aromatic-L-amino-acid decarboxylase (Ddc) from Mus musculus (Mouse).